Reading from the N-terminus, the 312-residue chain is Aspartate carbamoyltransferase catalytic subunit (312 aa).

Carbamoyl phosphate is bound by residues Arg58 and Thr59. An L-aspartate-binding site is contributed by Lys86. Residues Arg108, His136, and Gln139 each coordinate carbamoyl phosphate. Residues Arg169 and Arg223 each coordinate L-aspartate. Carbamoyl phosphate contacts are provided by Gly264 and Pro265.

Belongs to the aspartate/ornithine carbamoyltransferase superfamily. ATCase family. As to quaternary structure, heterododecamer (2C3:3R2) of six catalytic PyrB chains organized as two trimers (C3), and six regulatory PyrI chains organized as three dimers (R2).

It carries out the reaction carbamoyl phosphate + L-aspartate = N-carbamoyl-L-aspartate + phosphate + H(+). The protein operates within pyrimidine metabolism; UMP biosynthesis via de novo pathway; (S)-dihydroorotate from bicarbonate: step 2/3. Catalyzes the condensation of carbamoyl phosphate and aspartate to form carbamoyl aspartate and inorganic phosphate, the committed step in the de novo pyrimidine nucleotide biosynthesis pathway. The protein is Aspartate carbamoyltransferase catalytic subunit of Desulforapulum autotrophicum (strain ATCC 43914 / DSM 3382 / VKM B-1955 / HRM2) (Desulfobacterium autotrophicum).